The primary structure comprises 1404 residues: DNA-directed RNA polymerase subunit beta' (1404 aa).

Residues Cys-60, Cys-62, Cys-75, and Cys-78 each contribute to the Zn(2+) site. Mg(2+) contacts are provided by Asp-449, Asp-451, and Asp-453. Zn(2+) contacts are provided by Cys-778, Cys-852, Cys-859, and Cys-862. The disordered stretch occupies residues 1380–1404 (LDRPLEEEEEEEIPQAIAEESDAEE). Residues 1384 to 1404 (LEEEEEEEIPQAIAEESDAEE) show a composition bias toward acidic residues.

Belongs to the RNA polymerase beta' chain family. In terms of assembly, the RNAP catalytic core consists of 2 alpha, 1 beta, 1 beta' and 1 omega subunit. When a sigma factor is associated with the core the holoenzyme is formed, which can initiate transcription. The cofactor is Mg(2+). Requires Zn(2+) as cofactor.

The enzyme catalyses RNA(n) + a ribonucleoside 5'-triphosphate = RNA(n+1) + diphosphate. DNA-dependent RNA polymerase catalyzes the transcription of DNA into RNA using the four ribonucleoside triphosphates as substrates. This is DNA-directed RNA polymerase subunit beta' from Leptospira interrogans serogroup Icterohaemorrhagiae serovar Lai (strain 56601).